A 105-amino-acid chain; its full sequence is MIITTTPTVENRQIIEYKGLVFGEVVAGANIIRDFFASITDMIGGRSGVYEDKLNVARQEALVELQKQARNIGANAVIGVSIQYQSMGKKDMFIIVATGTAVVIG.

It belongs to the UPF0145 family.

This is UPF0145 protein HD_1349 from Haemophilus ducreyi (strain 35000HP / ATCC 700724).